The sequence spans 329 residues: 36 kDa antigen (329 aa).

A helical transmembrane segment spans residues 11–31; that stretch reads AILTGGGALLLGLIVLFYLAY.

The protein belongs to the membrane fusion protein (MFP) (TC 8.A.1) family.

The protein localises to the membrane. This Helicobacter pylori (strain ATCC 700392 / 26695) (Campylobacter pylori) protein is 36 kDa antigen.